We begin with the raw amino-acid sequence, 233 residues long: LexA repressor (233 aa).

Residues 26–46 (FDEMKDALDLRSKSGIHRLIT) constitute a DNA-binding region (H-T-H motif). Catalysis depends on for autocatalytic cleavage activity residues S154 and K192.

Belongs to the peptidase S24 family. As to quaternary structure, homodimer.

It catalyses the reaction Hydrolysis of Ala-|-Gly bond in repressor LexA.. In terms of biological role, represses a number of genes involved in the response to DNA damage (SOS response), including recA and lexA. In the presence of single-stranded DNA, RecA interacts with LexA causing an autocatalytic cleavage which disrupts the DNA-binding part of LexA, leading to derepression of the SOS regulon and eventually DNA repair. The chain is LexA repressor from Nitrobacter hamburgensis (strain DSM 10229 / NCIMB 13809 / X14).